A 531-amino-acid polypeptide reads, in one-letter code: MLSSITLLPLLAAVSTPAFAAVRNYKFDIKNVNVAPDGFQRPIVSVNGLVPGTLITANKGDTLRINVTNQLTDPSMRRATTIHWHGLFQATTADEDGPAFVTQCPIAQNLSYTYEIPLHGQTGTMWYHAHLASQYVDGLRGPLVIYDPNDPHKSRYDVDDASTVVMLEDWYHTPAPVLEKQMFSTNNTALLSPVPDSGLINGKGRYVGGPAVPRSVINVKRGKRYRLRVINASAIGSFTFSIEGHRLTVIEADGIPHQPLPVDSFQIYAGQRYSVIVEANQTAANYWIRAPMTVAGAGTNANLDPTNVFAVLHYEGAPNAEPTTEQGSAIGTALVEENLHALINPGAPGGSAPADVSLNLAIGRSTVDGILRFTFNNIKYEAPSLPTLLKILANNASNDADFTPNEHTIVLPHNKVIGAQHHRGADHPIHLHGHVFDIVKSLGGTPNYVNPPRRDVVRVGGTGVVLRFKADNPGPWFVHCHIDCTWRLGSHLSLPRPPARFARVSSRSSPTMPGTSSAPSTRLFLPICSKW.

The N-terminal stretch at 1-19 (MLSSITLLPLLAAVSTPAF) is a signal peptide. 3 consecutive Plastocyanin-like domains span residues 23–146 (RNYK…LVIY), 158–315 (VDDA…LHYE), and 384–507 (SLPT…VSSR). N66 carries an N-linked (GlcNAc...) asparagine glycan. Cu cation-binding residues include H83 and H85. C104 and C528 are disulfide-bonded. N-linked (GlcNAc...) asparagine glycosylation is present at N109. Residues H128 and H130 each coordinate Cu cation. Residues N186, N231, N280, and N395 are each glycosylated (N-linked (GlcNAc...) asparagine). Residues H427, H430, H432, H479, C480, and H481 each coordinate Cu cation.

It belongs to the multicopper oxidase family. As to quaternary structure, homodimer. The cofactor is Cu cation. In mycelia, at a higher level than LCC1, LCC2 and LCC3.

Its subcellular location is the secreted. It catalyses the reaction 4 hydroquinone + O2 = 4 benzosemiquinone + 2 H2O. Functionally, lignin degradation and detoxification of lignin-derived products. The protein is Laccase-4 (LCC4) of Thanatephorus cucumeris (Black scurf of potato).